The sequence spans 227 residues: Cytochrome c oxidase subunit 2 (227 aa).

At Met1–Ser14 the chain is on the mitochondrial intermembrane side. The helical transmembrane segment at Pro15–Met45 threads the bilayer. Topologically, residues Leu46 to Gln59 are mitochondrial matrix. Residues Glu60 to Met87 traverse the membrane as a helical segment. Topologically, residues Asp88–Leu227 are mitochondrial intermembrane. His161, Cys196, Glu198, Cys200, His204, and Met207 together coordinate Cu cation. Position 198 (Glu198) interacts with Mg(2+).

It belongs to the cytochrome c oxidase subunit 2 family. In terms of assembly, component of the cytochrome c oxidase (complex IV, CIV), a multisubunit enzyme composed of 14 subunits. The complex is composed of a catalytic core of 3 subunits MT-CO1, MT-CO2 and MT-CO3, encoded in the mitochondrial DNA, and 11 supernumerary subunits COX4I, COX5A, COX5B, COX6A, COX6B, COX6C, COX7A, COX7B, COX7C, COX8 and NDUFA4, which are encoded in the nuclear genome. The complex exists as a monomer or a dimer and forms supercomplexes (SCs) in the inner mitochondrial membrane with NADH-ubiquinone oxidoreductase (complex I, CI) and ubiquinol-cytochrome c oxidoreductase (cytochrome b-c1 complex, complex III, CIII), resulting in different assemblies (supercomplex SCI(1)III(2)IV(1) and megacomplex MCI(2)III(2)IV(2)). Found in a complex with TMEM177, COA6, COX18, COX20, SCO1 and SCO2. Interacts with TMEM177 in a COX20-dependent manner. Interacts with COX20. Interacts with COX16. Requires Cu cation as cofactor.

Its subcellular location is the mitochondrion inner membrane. It catalyses the reaction 4 Fe(II)-[cytochrome c] + O2 + 8 H(+)(in) = 4 Fe(III)-[cytochrome c] + 2 H2O + 4 H(+)(out). Functionally, component of the cytochrome c oxidase, the last enzyme in the mitochondrial electron transport chain which drives oxidative phosphorylation. The respiratory chain contains 3 multisubunit complexes succinate dehydrogenase (complex II, CII), ubiquinol-cytochrome c oxidoreductase (cytochrome b-c1 complex, complex III, CIII) and cytochrome c oxidase (complex IV, CIV), that cooperate to transfer electrons derived from NADH and succinate to molecular oxygen, creating an electrochemical gradient over the inner membrane that drives transmembrane transport and the ATP synthase. Cytochrome c oxidase is the component of the respiratory chain that catalyzes the reduction of oxygen to water. Electrons originating from reduced cytochrome c in the intermembrane space (IMS) are transferred via the dinuclear copper A center (CU(A)) of subunit 2 and heme A of subunit 1 to the active site in subunit 1, a binuclear center (BNC) formed by heme A3 and copper B (CU(B)). The BNC reduces molecular oxygen to 2 water molecules using 4 electrons from cytochrome c in the IMS and 4 protons from the mitochondrial matrix. The chain is Cytochrome c oxidase subunit 2 (MT-CO2) from Tupaia glis (Common tree shrew).